The following is a 513-amino-acid chain: ATP synthase subunit alpha (513 aa).

169–176 contacts ATP; that stretch reads GDRQTGKT.

Belongs to the ATPase alpha/beta chains family. In terms of assembly, F-type ATPases have 2 components, CF(1) - the catalytic core - and CF(0) - the membrane proton channel. CF(1) has five subunits: alpha(3), beta(3), gamma(1), delta(1), epsilon(1). CF(0) has three main subunits: a(1), b(2) and c(9-12). The alpha and beta chains form an alternating ring which encloses part of the gamma chain. CF(1) is attached to CF(0) by a central stalk formed by the gamma and epsilon chains, while a peripheral stalk is formed by the delta and b chains.

Its subcellular location is the cell inner membrane. It catalyses the reaction ATP + H2O + 4 H(+)(in) = ADP + phosphate + 5 H(+)(out). Functionally, produces ATP from ADP in the presence of a proton gradient across the membrane. The alpha chain is a regulatory subunit. The chain is ATP synthase subunit alpha from Citrobacter koseri (strain ATCC BAA-895 / CDC 4225-83 / SGSC4696).